The chain runs to 368 residues: UDP-N-acetylglucosamine--N-acetylmuramyl-(pentapeptide) pyrophosphoryl-undecaprenol N-acetylglucosamine transferase (368 aa).

Residues 13–15, asparagine 127, arginine 168, serine 200, isoleucine 254, and glutamine 299 each bind UDP-N-acetyl-alpha-D-glucosamine; that span reads TGG.

The protein belongs to the glycosyltransferase 28 family. MurG subfamily.

The protein resides in the cell inner membrane. It carries out the reaction di-trans,octa-cis-undecaprenyl diphospho-N-acetyl-alpha-D-muramoyl-L-alanyl-D-glutamyl-meso-2,6-diaminopimeloyl-D-alanyl-D-alanine + UDP-N-acetyl-alpha-D-glucosamine = di-trans,octa-cis-undecaprenyl diphospho-[N-acetyl-alpha-D-glucosaminyl-(1-&gt;4)]-N-acetyl-alpha-D-muramoyl-L-alanyl-D-glutamyl-meso-2,6-diaminopimeloyl-D-alanyl-D-alanine + UDP + H(+). Its pathway is cell wall biogenesis; peptidoglycan biosynthesis. Cell wall formation. Catalyzes the transfer of a GlcNAc subunit on undecaprenyl-pyrophosphoryl-MurNAc-pentapeptide (lipid intermediate I) to form undecaprenyl-pyrophosphoryl-MurNAc-(pentapeptide)GlcNAc (lipid intermediate II). This Parabacteroides distasonis (strain ATCC 8503 / DSM 20701 / CIP 104284 / JCM 5825 / NCTC 11152) protein is UDP-N-acetylglucosamine--N-acetylmuramyl-(pentapeptide) pyrophosphoryl-undecaprenol N-acetylglucosamine transferase.